Reading from the N-terminus, the 392-residue chain is Branched-chain-amino-acid aminotransferase, mitochondrial (392 aa).

The transit peptide at 1 to 27 (MAAAALGQIWARKFLSVPWLLCGPRRY) directs the protein to the mitochondrion. Tyr168 lines the substrate pocket. At Lys229 the chain carries N6-(pyridoxal phosphate)lysine. Lys321 is subject to N6-acetyllysine.

It belongs to the class-IV pyridoxal-phosphate-dependent aminotransferase family. As to quaternary structure, homodimer. Pyridoxal 5'-phosphate serves as cofactor.

It is found in the mitochondrion. It carries out the reaction L-leucine + 2-oxoglutarate = 4-methyl-2-oxopentanoate + L-glutamate. It catalyses the reaction L-isoleucine + 2-oxoglutarate = (S)-3-methyl-2-oxopentanoate + L-glutamate. The enzyme catalyses L-valine + 2-oxoglutarate = 3-methyl-2-oxobutanoate + L-glutamate. Its function is as follows. Catalyzes the first reaction in the catabolism of the essential branched chain amino acids leucine, isoleucine, and valine. May also function as a transporter of branched chain alpha-keto acids. In Pongo abelii (Sumatran orangutan), this protein is Branched-chain-amino-acid aminotransferase, mitochondrial (BCAT2).